A 217-amino-acid chain; its full sequence is MOB kinase activator 3A (217 aa).

Positions 83, 88, 165, and 170 each coordinate Zn(2+).

The protein belongs to the MOB1/phocein family.

In terms of biological role, may regulate the activity of kinases. The protein is MOB kinase activator 3A (MOB3A) of Bos taurus (Bovine).